Consider the following 768-residue polypeptide: Photosystem I P700 chlorophyll a apoprotein A1 (768 aa).

A run of 8 helical transmembrane segments spans residues 76–99 (VFSA…FHGA), 162–185 (LMAL…YHYH), 201–225 (LNHH…HIGA), 310–328 (ISHH…GHLY), 369–392 (WHAQ…HHMY), 408–434 (LGLF…IAMI), 456–478 (ALIS…LYIH), and 559–577 (FMIH…LILL). C601 and C610 together coordinate [4Fe-4S] cluster. 2 helical membrane-spanning segments follow: residues 617–638 (HVFL…HFSW) and 682–704 (ISMY…MFLF). A divinylchlorophyll a'-binding site is contributed by H693. Residues M701 and Y709 each coordinate divinyl chlorophyll a. W710 is a phylloquinone binding site. A helical membrane pass occupies residues 742–762 (AVGAAHFLLGGIATTWAFFHA).

It belongs to the PsaA/PsaB family. As to quaternary structure, the PsaA/B heterodimer binds the P700 divinyl chlorophyll special pair and subsequent electron acceptors. PSI consists of a core antenna complex that captures photons, and an electron transfer chain that converts photonic excitation into a charge separation. The cyanobacterial PSI reaction center is composed of one copy each of PsaA,B,C,D,E,F,I,J,K,L,M and X, and forms trimeric complexes. PSI electron transfer chain: 5 divinyl chlorophyll a, 1 divinyl chlorophyll a', 2 phylloquinones and 3 4Fe-4S clusters. PSI core antenna: 90 divinyl chlorophyll a, 22 carotenoids, 3 phospholipids and 1 galactolipid. P700 is a divinyl chlorophyll a/divinyl chlorophyll a' dimer, A0 is one or more divinyl chlorophyll a, A1 is one or both phylloquinones and FX is a shared 4Fe-4S iron-sulfur center. serves as cofactor.

Its subcellular location is the cellular thylakoid membrane. The enzyme catalyses reduced [plastocyanin] + hnu + oxidized [2Fe-2S]-[ferredoxin] = oxidized [plastocyanin] + reduced [2Fe-2S]-[ferredoxin]. PsaA and PsaB bind P700, the primary electron donor of photosystem I (PSI), as well as the electron acceptors A0, A1 and FX. PSI is a plastocyanin/cytochrome c6-ferredoxin oxidoreductase, converting photonic excitation into a charge separation, which transfers an electron from the donor P700 chlorophyll pair to the spectroscopically characterized acceptors A0, A1, FX, FA and FB in turn. Oxidized P700 is reduced on the lumenal side of the thylakoid membrane by plastocyanin or cytochrome c6. The polypeptide is Photosystem I P700 chlorophyll a apoprotein A1 (Prochlorococcus marinus (strain NATL2A)).